The following is a 442-amino-acid chain: D-aminoacyl-tRNA deacylase (442 aa).

It belongs to the DtdA deacylase family. In terms of assembly, monomer. The cofactor is Zn(2+).

It catalyses the reaction a D-aminoacyl-tRNA + H2O = a tRNA + a D-alpha-amino acid + H(+). It carries out the reaction glycyl-tRNA(Ala) + H2O = tRNA(Ala) + glycine + H(+). In terms of biological role, D-aminoacyl-tRNA deacylase with broad substrate specificity. By recycling D-aminoacyl-tRNA to D-amino acids and free tRNA molecules, this enzyme counteracts the toxicity associated with the formation of D-aminoacyl-tRNA entities in vivo. This Methanospirillum hungatei JF-1 (strain ATCC 27890 / DSM 864 / NBRC 100397 / JF-1) protein is D-aminoacyl-tRNA deacylase.